A 342-amino-acid chain; its full sequence is Ferredoxin--NADP reductase (342 aa).

FAD is bound by residues Cys17, Asp36, Gln44, Tyr49, Val89, Phe124, Asp289, and Thr330.

This sequence belongs to the ferredoxin--NADP reductase type 2 family. Homodimer. FAD serves as cofactor.

It carries out the reaction 2 reduced [2Fe-2S]-[ferredoxin] + NADP(+) + H(+) = 2 oxidized [2Fe-2S]-[ferredoxin] + NADPH. This chain is Ferredoxin--NADP reductase, found in Bradyrhizobium sp. (strain BTAi1 / ATCC BAA-1182).